A 95-amino-acid polypeptide reads, in one-letter code: Cell division topological specificity factor (95 aa).

It belongs to the MinE family.

Its function is as follows. Prevents the cell division inhibition by proteins MinC and MinD at internal division sites while permitting inhibition at polar sites. This ensures cell division at the proper site by restricting the formation of a division septum at the midpoint of the long axis of the cell. This is Cell division topological specificity factor from Microcystis aeruginosa (strain NIES-843 / IAM M-2473).